A 273-amino-acid chain; its full sequence is 4-hydroxy-tetrahydrodipicolinate reductase (273 aa).

Residues 11 to 16 (GAGGRM) and E36 contribute to the NAD(+) site. Residue R37 participates in NADP(+) binding. NAD(+) is bound by residues 100–102 (GTT) and 124–127 (AANY). Catalysis depends on H157, which acts as the Proton donor/acceptor. H158 is a (S)-2,3,4,5-tetrahydrodipicolinate binding site. K161 acts as the Proton donor in catalysis. 167 to 168 (GT) is a (S)-2,3,4,5-tetrahydrodipicolinate binding site.

It belongs to the DapB family.

It localises to the cytoplasm. It carries out the reaction (S)-2,3,4,5-tetrahydrodipicolinate + NAD(+) + H2O = (2S,4S)-4-hydroxy-2,3,4,5-tetrahydrodipicolinate + NADH + H(+). It catalyses the reaction (S)-2,3,4,5-tetrahydrodipicolinate + NADP(+) + H2O = (2S,4S)-4-hydroxy-2,3,4,5-tetrahydrodipicolinate + NADPH + H(+). The protein operates within amino-acid biosynthesis; L-lysine biosynthesis via DAP pathway; (S)-tetrahydrodipicolinate from L-aspartate: step 4/4. Catalyzes the conversion of 4-hydroxy-tetrahydrodipicolinate (HTPA) to tetrahydrodipicolinate. The chain is 4-hydroxy-tetrahydrodipicolinate reductase from Acinetobacter baumannii (strain ACICU).